The sequence spans 757 residues: Polyribonucleotide nucleotidyltransferase (757 aa).

Mg(2+) contacts are provided by Asp-489 and Asp-495. Positions 556–615 (PKILCYKIDKDVVHKVIGSGGKTIRGISSDTSAKIDIDQNNYVYIMADTEEALMEAKTRV) constitute a KH domain. In terms of domain architecture, S1 motif spans 632-700 (GELYDGKIVS…SDGKIKLTMR (69 aa)). Positions 702 to 757 (DEDRVGSGGSSSSPKKRFGAHPRKNGKDNRSNNSERGFNERSGSAEGSSISRKRFF) are disordered. The span at 715-725 (PKKRFGAHPRK) shows a compositional bias: basic residues. Residues 732–751 (SNNSERGFNERSGSAEGSSI) show a composition bias toward polar residues.

This sequence belongs to the polyribonucleotide nucleotidyltransferase family. Mg(2+) is required as a cofactor.

It is found in the cytoplasm. It catalyses the reaction RNA(n+1) + phosphate = RNA(n) + a ribonucleoside 5'-diphosphate. Its function is as follows. Involved in mRNA degradation. Catalyzes the phosphorolysis of single-stranded polyribonucleotides processively in the 3'- to 5'-direction. This chain is Polyribonucleotide nucleotidyltransferase, found in Neorickettsia sennetsu (strain ATCC VR-367 / Miyayama) (Ehrlichia sennetsu).